The primary structure comprises 356 residues: Cyanuric acid amidohydrolase (356 aa).

An RU A region spans residues 1–99; that stretch reads MPIAKVHRIA…FLVFERAEGN (99 aa). Residues R52 and 79–80 each bind substrate; that span reads SG. Residues 106-243 form an RU B region; it reads ALAIGRAHTP…HEIVVLGMSE (138 aa). K156 is an active-site residue. Substrate-binding positions include R188 and 226-227; that span reads SS. S226 serves as the catalytic Nucleophile. The tract at residues 249-356 is RU C; it reads LAIAHGVMAD…VAVIAARTMG (108 aa). E287 is a binding site for Mg(2+). Substrate is bound by residues R314 and 333-334; that span reads SG. G336, Q339, G340, P341, and G344 together coordinate Mg(2+).

This sequence belongs to the cyclic amide hydrolase (CyAH) family. Homotetramer.

It carries out the reaction cyanurate + H2O = 1-carboxybiuret + H(+). It participates in xenobiotic degradation; atrazine degradation; biuret from cyanurate: step 1/1. Inhibited by barbituric acid. Functionally, responsible for the hydrolysis of cyanuric acid, an intermediate formed during catabolism of s-triazine based compounds in herbicides such as atrazine and polymers such as melamine. Catalyzes the hydrolytic opening of the s-triazine ring of cyanuric acid (2,4,6-trihydroxy-s-triazine) to yield carbon dioxide and carboxybiuret, which spontaneously decarboxylates to biuret. The polypeptide is Cyanuric acid amidohydrolase (Azorhizobium caulinodans (strain ATCC 43989 / DSM 5975 / JCM 20966 / LMG 6465 / NBRC 14845 / NCIMB 13405 / ORS 571)).